An 859-amino-acid chain; its full sequence is DNA mismatch repair protein MutS (859 aa).

An ATP-binding site is contributed by 618-625 (GPNMGGKS).

This sequence belongs to the DNA mismatch repair MutS family.

Functionally, this protein is involved in the repair of mismatches in DNA. It is possible that it carries out the mismatch recognition step. This protein has a weak ATPase activity. This is DNA mismatch repair protein MutS from Shewanella halifaxensis (strain HAW-EB4).